Consider the following 153-residue polypeptide: Transcription antitermination protein NusB (153 aa).

It belongs to the NusB family.

Involved in transcription antitermination. Required for transcription of ribosomal RNA (rRNA) genes. Binds specifically to the boxA antiterminator sequence of the ribosomal RNA (rrn) operons. This is Transcription antitermination protein NusB from Beutenbergia cavernae (strain ATCC BAA-8 / DSM 12333 / CCUG 43141 / JCM 11478 / NBRC 16432 / NCIMB 13614 / HKI 0122).